The following is a 64-amino-acid chain: Large ribosomal subunit protein bL35 (64 aa).

2 stretches are compositionally biased toward basic residues: residues 1–15 (MPKNKTHSGASKRFK) and 27–42 (AGKRHLLEHKSSKKTR). The disordered stretch occupies residues 1–45 (MPKNKTHSGASKRFKITGSGKVLRERAGKRHLLEHKSSKKTRSLT).

The protein belongs to the bacterial ribosomal protein bL35 family.

The sequence is that of Large ribosomal subunit protein bL35 from Streptomyces griseus subsp. griseus (strain JCM 4626 / CBS 651.72 / NBRC 13350 / KCC S-0626 / ISP 5235).